The primary structure comprises 910 residues: Alanine--tRNA ligase (910 aa).

Positions 488-505 are enriched in basic and acidic residues; it reads RHEEKKEDSKSEKGENTA. The segment at 488 to 507 is disordered; it reads RHEEKKEDSKSEKGENTAEK. Positions 614, 618, 718, and 722 each coordinate Zn(2+).

This sequence belongs to the class-II aminoacyl-tRNA synthetase family. Zn(2+) serves as cofactor.

The protein resides in the cytoplasm. The enzyme catalyses tRNA(Ala) + L-alanine + ATP = L-alanyl-tRNA(Ala) + AMP + diphosphate. Functionally, catalyzes the attachment of alanine to tRNA(Ala) in a two-step reaction: alanine is first activated by ATP to form Ala-AMP and then transferred to the acceptor end of tRNA(Ala). Also edits incorrectly charged Ser-tRNA(Ala) and Gly-tRNA(Ala) via its editing domain. In Methanococcus aeolicus (strain ATCC BAA-1280 / DSM 17508 / OCM 812 / Nankai-3), this protein is Alanine--tRNA ligase.